A 288-amino-acid polypeptide reads, in one-letter code: MERPQPDSMPQDLSEALKEATKEVHTQAENAEFMRNFQKGQVTRDGFKLVMASLYHIYVALEEEIERNKESPVFAPVYFPEELHRKAALEQDLAFWYGPRWQEVIPYTPAMQRYVKRLHEVGRTEPELLVAHAYTRYLGDLSGGQVLKKIAQKALDLPSSGEGLAFFTFPNIASATKFKQLYRSRMNSLEMTPAVRQRVIEEAKTAFLLNIQLFEELQELLTHDTKDQSPSRAPGLRQRASNKVQDSAPVETPRGKPPLNTRSQAPLLRWVLTLSFLVATVAVGLYAM.

Residues 1 to 265 (MERPQPDSMP…KPPLNTRSQA (265 aa)) are Cytoplasmic-facing. Residues lysine 18, histidine 25, tyrosine 134, and arginine 183 each contribute to the heme b site. The tract at residues 223–260 (HDTKDQSPSRAPGLRQRASNKVQDSAPVETPRGKPPLN) is disordered. Serine 229 bears the Phosphoserine mark. A helical; Anchor for type IV membrane protein transmembrane segment spans residues 266 to 288 (PLLRWVLTLSFLVATVAVGLYAM).

Belongs to the heme oxygenase family. In terms of assembly, (Microbial infection) Interacts with SARS-CoV-2 ORF3A protein; the interaction promotes ORF3A-induced autophagy but is unlikely to be involved in ORF3A-mediated induction of reticulophagy. As to quaternary structure, homodimer and higher order homooligomer. Oligomerization is crucial for its stability and function in the endoplasmic reticulum. Interacts with FLVCR2; this interaction is potentiated in the presence of heme. A soluble form arises by proteolytic removal of the membrane anchor. In terms of tissue distribution, expressed at higher levels in renal cancer tissue than in normal tissue (at protein level).

Its subcellular location is the endoplasmic reticulum membrane. The catalysed reaction is heme b + 3 reduced [NADPH--hemoprotein reductase] + 3 O2 = biliverdin IXalpha + CO + Fe(2+) + 3 oxidized [NADPH--hemoprotein reductase] + 3 H2O + H(+). Its function is as follows. Catalyzes the oxidative cleavage of heme at the alpha-methene bridge carbon, released as carbon monoxide (CO), to generate biliverdin IXalpha, while releasing the central heme iron chelate as ferrous iron. Affords protection against programmed cell death and this cytoprotective effect relies on its ability to catabolize free heme and prevent it from sensitizing cells to undergo apoptosis. Functionally, (Microbial infection) During SARS-COV-2 infection, promotes SARS-CoV-2 ORF3A-mediated autophagy but is unlikely to be required for ORF3A-mediated induction of reticulophagy. In terms of biological role, catalyzes the oxidative cleavage of heme at the alpha-methene bridge carbon, released as carbon monoxide (CO), to generate biliverdin IXalpha, while releasing the central heme iron chelate as ferrous iron. The protein is Heme oxygenase 1 (HMOX1) of Homo sapiens (Human).